The primary structure comprises 337 residues: D-alanine--D-alanine ligase (337 aa).

The 207-residue stretch at 124 to 330 folds into the ATP-grasp domain; it reads KMWFSALGIP…FTEYLSLVIN (207 aa). 154–209 is a binding site for ATP; that stretch reads ALANWGSIFIKAASQGSSVGCYKVDDSSKVAQVLKDAFGYAPYVVVEKTIKARELE. Positions 284, 297, and 299 each coordinate Mg(2+).

This sequence belongs to the D-alanine--D-alanine ligase family. Requires Mg(2+) as cofactor. The cofactor is Mn(2+).

It localises to the cytoplasm. It catalyses the reaction 2 D-alanine + ATP = D-alanyl-D-alanine + ADP + phosphate + H(+). It functions in the pathway cell wall biogenesis; peptidoglycan biosynthesis. Cell wall formation. The protein is D-alanine--D-alanine ligase of Shewanella sp. (strain W3-18-1).